Here is a 299-residue protein sequence, read N- to C-terminus: Bifunctional protein FolD 2 (299 aa).

This sequence belongs to the tetrahydrofolate dehydrogenase/cyclohydrolase family. As to quaternary structure, homodimer.

The enzyme catalyses (6R)-5,10-methylene-5,6,7,8-tetrahydrofolate + NADP(+) = (6R)-5,10-methenyltetrahydrofolate + NADPH. It catalyses the reaction (6R)-5,10-methenyltetrahydrofolate + H2O = (6R)-10-formyltetrahydrofolate + H(+). It functions in the pathway one-carbon metabolism; tetrahydrofolate interconversion. Its function is as follows. Catalyzes the oxidation of 5,10-methylenetetrahydrofolate to 5,10-methenyltetrahydrofolate and then the hydrolysis of 5,10-methenyltetrahydrofolate to 10-formyltetrahydrofolate. The sequence is that of Bifunctional protein FolD 2 (FOLD2) from Arabidopsis thaliana (Mouse-ear cress).